The chain runs to 159 residues: Transcriptional repressor NrdR (159 aa).

Residues 3 to 34 (CPFCRHDDTQVVDSRVSEDGAAIRRRRRCSAC) fold into a zinc finger. Residues 49-139 (PAVVKKDGSR…VYRRFEDVSE (91 aa)) enclose the ATP-cone domain.

This sequence belongs to the NrdR family. The cofactor is Zn(2+).

Functionally, negatively regulates transcription of bacterial ribonucleotide reductase nrd genes and operons by binding to NrdR-boxes. This Burkholderia pseudomallei (strain 1106a) protein is Transcriptional repressor NrdR.